The primary structure comprises 232 residues: TIR domain-containing adapter molecule 2 (232 aa).

A compositionally biased stretch (basic and acidic residues) spans 1 to 10 (MGIGKSKMDP). The interval 1–71 (MGIGKSKMDP…VEERPEEDTE (71 aa)) is disordered. Residue Gly-2 is the site of N-myristoyl glycine attachment. Positions 19 to 29 (KSQSVDTSQSH) are enriched in polar residues. The segment covering 30-42 (HMSDSKQSEEISL) has biased composition (basic and acidic residues). The span at 55–71 (PAEEQEGVEERPEEDTE) shows a compositional bias: acidic residues. Residues 70–226 (TEEEVFLKFV…AIWKETRNTV (157 aa)) enclose the TIR domain. Position 164 is a phosphotyrosine (Tyr-164).

Homodimer. Interacts with TLR4, TICAM1, IRF3 and IRF7 in response to LPS. Interacts with IL1R1, IL1RAP, IRAK2, IRAK3 and TRAF6. Interacts with protein kinase-inactive mutants of IRAK1 and IRAK4. Isoform 1 interacts with isoform 2; the interaction occurs in late endosomes and disrupts the interaction between isoform 1 and TICAM1. Interacts with MYD88; the interaction decreases after IL-18 stimulation in a time-dependent manner. Interacts with IL18R1 and IL18RAP. Interacts with TLR2. Interacts with RAB11FIP2. Post-translationally, myristoylated. Required for membrane association which is critical for its ability to initiate efficient signaling. Phosphorylated by PRKCE in response to LPS. Phosphorylation is essential for its function. It is depleted from the membrane upon phosphorylation. Tyrosine phosphorylation is inhibited by phosphatase PTPN4.

The protein localises to the cytoplasm. It localises to the golgi apparatus. Its subcellular location is the cell membrane. It is found in the endoplasmic reticulum. The protein resides in the early endosome. The protein localises to the late endosome. It localises to the cell projection. Its subcellular location is the phagocytic cup. Its function is as follows. Functions as a sorting adapter in different signaling pathways to facilitate downstream signaling leading to type I interferon induction. In TLR4 signaling, physically bridges TLR4 and TICAM1 and functionally transmits signal to TICAM1 in early endosomes after endocytosis of TLR4. In TLR2 signaling, physically bridges TLR2 and MYD88 and is required for the TLR2-dependent movement of MYD88 to endosomes following ligand engagement. Involved in IL-18 signaling and is proposed to function as a sorting adapter for MYD88 in IL-18 signaling during adaptive immune response. Forms a complex with RAB11FIP2 that is recruited to the phagosomes to promote the activation of the actin-regulatory GTPases RAC1 and CDC42 and subsequent phagocytosis of Gram-negative bacteria. The sequence is that of TIR domain-containing adapter molecule 2 (TICAM2) from Bos taurus (Bovine).